Reading from the N-terminus, the 1289-residue chain is uncharacterized protein (1289 aa).

The MHD1 domain occupies 615-733 (LDMYDVLKEL…DGMLSYSAQL (119 aa)). Positions 745-774 (DEPSYSLESSDTRSSLSLNNANVNHEKSRS) are disordered. Low complexity predominate over residues 748–762 (SYSLESSDTRSSLSL). One can recognise a C2 domain in the interval 834–966 (AQYHSSHNLE…DDGFPIDFSL (133 aa)). An MHD2 domain is found at 1044 to 1184 (YDAILPLFDY…KSVSELKDEV (141 aa)).

It is found in the cytoplasm. This is an uncharacterized protein from Saccharomyces cerevisiae (strain ATCC 204508 / S288c) (Baker's yeast).